The primary structure comprises 518 residues: OTU domain-containing protein 5 (518 aa).

2 disordered regions span residues 1-79 (MTIL…SGGA) and 105-144 (PGHSKRRRQGVSAGPGAPGSSPDREDGAGNNSEDEYETAA). Over residues 39–53 (SSPPPRWAYPGNPAP) the composition is skewed to pro residues. Low complexity predominate over residues 116 to 125 (SAGPGAPGSS). Residues 171–294 (FIIKQMKEDG…NIHYNSVVNP (124 aa)) enclose the OTU domain. The interval 176–182 (MKEDGAC) is cys-loop. The active site involves Asp179. Cys182 acts as the Nucleophile in catalysis. The tract at residues 231-241 (KRKNNCHGNHI) is variable-loop. Residues 282 to 287 (YHRNIH) are his-loop. His287 is an active-site residue. A disordered region spans residues 371–450 (ARQPRKASAT…GPSNQTCAGA (80 aa)). Positions 377–390 (ASATCSSATAAASS) are enriched in low complexity.

It belongs to the peptidase C85 family.

The enzyme catalyses Thiol-dependent hydrolysis of ester, thioester, amide, peptide and isopeptide bonds formed by the C-terminal Gly of ubiquitin (a 76-residue protein attached to proteins as an intracellular targeting signal).. Its function is as follows. Deubiquitinating enzyme that may function as negative regulator of the innate immune system. Has peptidase activity towards 'Lys-48'- and 'Lys-63'-linked polyubiquitin chains. Can also cleave 'Lys-11'-linked ubiquitin chains (in vitro). This Xenopus tropicalis (Western clawed frog) protein is OTU domain-containing protein 5 (otud5).